The primary structure comprises 78 residues: UPF0349 protein GK2958 (78 aa).

This sequence belongs to the UPF0349 family.

In Geobacillus kaustophilus (strain HTA426), this protein is UPF0349 protein GK2958.